The sequence spans 567 residues: Zinc finger protein 512 (567 aa).

A disordered region spans residues 1–32 (MSSRLGAVPATSGPTTFKQQRSTRIVGAKNSR). Residues 12 to 23 (SGPTTFKQQRST) show a composition bias toward polar residues. Residues Lys-18 and Lys-84 each participate in a glycyl lysine isopeptide (Lys-Gly) (interchain with G-Cter in SUMO2) cross-link. The interval 86–148 (AATSHVEGSG…QARRIRKEPP (63 aa)) is disordered. A compositionally biased stretch (basic residues) spans 119–130 (KKHKLYGRKQRP). A C2H2-type 1 zinc finger spans residues 197–220 (FTCHHCGKQLRSLAGMKYHVMANH). Residue Lys-227 forms a Glycyl lysine isopeptide (Lys-Gly) (interchain with G-Cter in SUMO2) linkage. The segment at 287–310 (LKCHHCGKPYRSKAGLAYHLRSEH) adopts a C2H2-type 2 zinc-finger fold. A Glycyl lysine isopeptide (Lys-Gly) (interchain with G-Cter in SUMO2) cross-link involves residue Lys-333. Residues 406-430 (IQCPNQGCEAVYSSVSGLKAHLGSC) form a C2H2-type 3; atypical zinc finger. Residues 440–463 (YKCLLCQKEFVSESGVKYHINSVH) form a C2H2-type 4 zinc finger. The segment at 486 to 567 (QRQQEEEKRR…PKTNHKRGRK (82 aa)) is disordered. A compositionally biased stretch (basic residues) spans 495-508 (RQQHRSRRSLRRRQ). Over residues 523–532 (VGKDQRRNNE) the composition is skewed to basic and acidic residues. Positions 556–567 (KPPKTNHKRGRK) are enriched in basic residues.

The protein belongs to the krueppel C2H2-type zinc-finger protein family.

It is found in the nucleus. Its function is as follows. May be involved in transcriptional regulation. This chain is Zinc finger protein 512 (ZNF512), found in Homo sapiens (Human).